We begin with the raw amino-acid sequence, 91 residues long: Probable Fe(2+)-trafficking protein (91 aa).

It belongs to the Fe(2+)-trafficking protein family.

In terms of biological role, could be a mediator in iron transactions between iron acquisition and iron-requiring processes, such as synthesis and/or repair of Fe-S clusters in biosynthetic enzymes. In Shewanella amazonensis (strain ATCC BAA-1098 / SB2B), this protein is Probable Fe(2+)-trafficking protein.